We begin with the raw amino-acid sequence, 148 residues long: UPF0756 membrane protein YeaL (148 aa).

4 consecutive transmembrane segments (helical) span residues 14 to 34 (ALGF…LIIV), 51 to 71 (LSIG…SGTL), 86 to 106 (LVAI…VTLM), and 121 to 141 (VLGV…AGLV).

It belongs to the UPF0756 family.

It localises to the cell membrane. The chain is UPF0756 membrane protein YeaL from Shigella boydii serotype 18 (strain CDC 3083-94 / BS512).